We begin with the raw amino-acid sequence, 287 residues long: ATP synthase gamma chain (287 aa).

This sequence belongs to the ATPase gamma chain family. As to quaternary structure, F-type ATPases have 2 components, CF(1) - the catalytic core - and CF(0) - the membrane proton channel. CF(1) has five subunits: alpha(3), beta(3), gamma(1), delta(1), epsilon(1). CF(0) has three main subunits: a, b and c.

It localises to the cell inner membrane. Produces ATP from ADP in the presence of a proton gradient across the membrane. The gamma chain is believed to be important in regulating ATPase activity and the flow of protons through the CF(0) complex. The protein is ATP synthase gamma chain of Pectobacterium carotovorum subsp. carotovorum (strain PC1).